The sequence spans 121 residues: Large ribosomal subunit protein bL12 (121 aa).

The protein belongs to the bacterial ribosomal protein bL12 family. As to quaternary structure, homodimer. Part of the ribosomal stalk of the 50S ribosomal subunit. Forms a multimeric L10(L12)X complex, where L10 forms an elongated spine to which 2 to 4 L12 dimers bind in a sequential fashion. Binds GTP-bound translation factors.

Functionally, forms part of the ribosomal stalk which helps the ribosome interact with GTP-bound translation factors. Is thus essential for accurate translation. This Vibrio cholerae serotype O1 (strain ATCC 39541 / Classical Ogawa 395 / O395) protein is Large ribosomal subunit protein bL12.